Reading from the N-terminus, the 844-residue chain is Translation initiation factor IF-2 (844 aa).

Positions 1–11 are enriched in basic and acidic residues; that stretch reads MTEDVKADAPK. Disordered stretches follow at residues 1–48 and 79–249; these read MTED…VKTD and RLEA…GTAL. The span at 21–30 shows a compositional bias: low complexity; that stretch reads TTVSSTTTGG. A compositionally biased stretch (basic and acidic residues) spans 79–161; that stretch reads RLEAEKAATK…AAEEAKRYAE (83 aa). Residues 162 to 175 are compositionally biased toward acidic residues; sequence ADDSDNESSSEDYS. A compositionally biased stretch (basic residues) spans 200 to 210; the sequence is RGKNKVAKAKK. The segment covering 211-237 has biased composition (basic and acidic residues); that stretch reads GGRDDENSKNSKNERESNRKNQKDAKF. One can recognise a tr-type G domain in the interval 343-513; it reads TRAPVVTIMG…LLQSEVLELT (171 aa). A G1 region spans residues 352–359; sequence GHVDHGKT. A GTP-binding site is contributed by 352 to 359; that stretch reads GHVDHGKT. The segment at 377–381 is G2; that stretch reads GITQH. The G3 stretch occupies residues 399–402; it reads DTPG. GTP contacts are provided by residues 399–403 and 453–456; these read DTPGH and NKID. The G4 stretch occupies residues 453-456; the sequence is NKID. Positions 489 to 491 are G5; sequence SAK.

It belongs to the TRAFAC class translation factor GTPase superfamily. Classic translation factor GTPase family. IF-2 subfamily.

It localises to the cytoplasm. Functionally, one of the essential components for the initiation of protein synthesis. Protects formylmethionyl-tRNA from spontaneous hydrolysis and promotes its binding to the 30S ribosomal subunits. Also involved in the hydrolysis of GTP during the formation of the 70S ribosomal complex. The protein is Translation initiation factor IF-2 of Haemophilus influenzae (strain 86-028NP).